The following is a 258-amino-acid chain: Acyl-[acyl-carrier-protein]--UDP-N-acetylglucosamine O-acyltransferase (258 aa).

This sequence belongs to the transferase hexapeptide repeat family. LpxA subfamily. Homotrimer.

Its subcellular location is the cytoplasm. It carries out the reaction a (3R)-hydroxyacyl-[ACP] + UDP-N-acetyl-alpha-D-glucosamine = a UDP-3-O-[(3R)-3-hydroxyacyl]-N-acetyl-alpha-D-glucosamine + holo-[ACP]. Its pathway is glycolipid biosynthesis; lipid IV(A) biosynthesis; lipid IV(A) from (3R)-3-hydroxytetradecanoyl-[acyl-carrier-protein] and UDP-N-acetyl-alpha-D-glucosamine: step 1/6. Its function is as follows. Involved in the biosynthesis of lipid A, a phosphorylated glycolipid that anchors the lipopolysaccharide to the outer membrane of the cell. This Ectopseudomonas mendocina (strain ymp) (Pseudomonas mendocina) protein is Acyl-[acyl-carrier-protein]--UDP-N-acetylglucosamine O-acyltransferase.